The primary structure comprises 509 residues: MNEDKDTDSKKSEEYEDDFEKDLEWLINENEKSDASIIEMACEKEENINQDLKENETVIEHTKQHSDPDKSLQDEVSPRKNDIISVPGIQPLDPISDSDSENSFQESRLESQKDLEEEEDEEVRRYIMEKIVQANKLLQNQEPVNDKRERKLKFEDKLVDLEVPPLEDTTTSKNYFENERNMFGKLSQLCISNDFGQENVLLSLTNVSCEENKDRTILVERDGKFELLNLQDIASQGFLPPINNANTTENDPQQLLPRSSNSSVSGTKKEDSAAKIHAVTHSSTGKPLAYIPQPPLNRKTCPSSAVISDQSKGNGNSNHRAQSAHISPVTSTCCLSPRQKELQKQLEQKREKLKREEERRKIEEEKEKKRENDIVFKAWLQKKREQVLEMRRIQRAKEIEDMNSRQENRDPQQAFRLWLKKKHEEQMKERQTEELRKQEECLFFLKGTEGRERAFKQWLRRKRIEKMAEQQAVRERTRQLRLEAKRSKQLQHHLYMSEAKPFRFTDHYN.

Over residues 58-82 the composition is skewed to basic and acidic residues; the sequence is VIEHTKQHSDPDKSLQDEVSPRKND. Disordered regions lie at residues 58–120, 241–332, and 345–367; these read VIEH…EEED, PINN…VTST, and QLEQKREKLKREEERRKIEEEKE. Polar residues-rich tracts occupy residues 243–266 and 300–332; these read NNANTTENDPQQLLPRSSNSSVSG and TCPSSAVISDQSKGNGNSNHRAQSAHISPVTST. The stretch at 335–375 forms a coiled coil; the sequence is LSPRQKELQKQLEQKREKLKREEERRKIEEEKEKKRENDIV.

It belongs to the CCDC181 family. As to quaternary structure, homodimer. Interacts with HOOK1. Interacts with HOOK2. Interacts with HOOK3.

The protein resides in the cytoplasm. The protein localises to the cytoskeleton. It is found in the cell projection. It localises to the cilium. Its subcellular location is the flagellum. Microtubule-binding protein that localizes to the microtubular manchette of elongating spermatids. This chain is Coiled-coil domain-containing protein 181, found in Pongo abelii (Sumatran orangutan).